The sequence spans 496 residues: Lysine--tRNA ligase (496 aa).

Mg(2+)-binding residues include Glu409 and Glu416.

Belongs to the class-II aminoacyl-tRNA synthetase family. Homodimer. Mg(2+) is required as a cofactor.

Its subcellular location is the cytoplasm. It catalyses the reaction tRNA(Lys) + L-lysine + ATP = L-lysyl-tRNA(Lys) + AMP + diphosphate. In Streptococcus agalactiae serotype III (strain NEM316), this protein is Lysine--tRNA ligase.